Here is a 609-residue protein sequence, read N- to C-terminus: UvrABC system protein C (609 aa).

The region spanning 15–92 is the GIY-YIG domain; it reads TGSGVYQMQD…IKQFRPRYNV (78 aa). The UVR domain occupies 202–237; it reads DQVIIKLTERMEVASENLVFEEAAHYRDQIRQLRRL.

Belongs to the UvrC family. As to quaternary structure, interacts with UvrB in an incision complex.

Its subcellular location is the cytoplasm. Its function is as follows. The UvrABC repair system catalyzes the recognition and processing of DNA lesions. UvrC both incises the 5' and 3' sides of the lesion. The N-terminal half is responsible for the 3' incision and the C-terminal half is responsible for the 5' incision. The chain is UvrABC system protein C from Coxiella burnetii (strain CbuG_Q212) (Coxiella burnetii (strain Q212)).